The primary structure comprises 180 residues: ATP synthase subunit delta (180 aa).

This sequence belongs to the ATPase delta chain family. In terms of assembly, F-type ATPases have 2 components, F(1) - the catalytic core - and F(0) - the membrane proton channel. F(1) has five subunits: alpha(3), beta(3), gamma(1), delta(1), epsilon(1). F(0) has three main subunits: a(1), b(2) and c(10-14). The alpha and beta chains form an alternating ring which encloses part of the gamma chain. F(1) is attached to F(0) by a central stalk formed by the gamma and epsilon chains, while a peripheral stalk is formed by the delta and b chains.

It is found in the cell inner membrane. Functionally, f(1)F(0) ATP synthase produces ATP from ADP in the presence of a proton or sodium gradient. F-type ATPases consist of two structural domains, F(1) containing the extramembraneous catalytic core and F(0) containing the membrane proton channel, linked together by a central stalk and a peripheral stalk. During catalysis, ATP synthesis in the catalytic domain of F(1) is coupled via a rotary mechanism of the central stalk subunits to proton translocation. Its function is as follows. This protein is part of the stalk that links CF(0) to CF(1). It either transmits conformational changes from CF(0) to CF(1) or is implicated in proton conduction. This is ATP synthase subunit delta from Anaplasma phagocytophilum (strain HZ).